We begin with the raw amino-acid sequence, 394 residues long: Succinate--CoA ligase [ADP-forming] subunit beta 1 (394 aa).

The ATP-grasp domain occupies 9–237 (RDLFAKHDVP…KAAANPLEAA (229 aa)). Residues K45, 52–54 (GRG), E92, P95, and E100 contribute to the ATP site. N192 and D206 together coordinate Mg(2+). Residues N257 and 319-321 (GIT) each bind substrate.

It belongs to the succinate/malate CoA ligase beta subunit family. As to quaternary structure, heterotetramer of two alpha and two beta subunits. It depends on Mg(2+) as a cofactor.

It catalyses the reaction succinate + ATP + CoA = succinyl-CoA + ADP + phosphate. The catalysed reaction is GTP + succinate + CoA = succinyl-CoA + GDP + phosphate. Its pathway is carbohydrate metabolism; tricarboxylic acid cycle; succinate from succinyl-CoA (ligase route): step 1/1. In terms of biological role, succinyl-CoA synthetase functions in the citric acid cycle (TCA), coupling the hydrolysis of succinyl-CoA to the synthesis of either ATP or GTP and thus represents the only step of substrate-level phosphorylation in the TCA. The beta subunit provides nucleotide specificity of the enzyme and binds the substrate succinate, while the binding sites for coenzyme A and phosphate are found in the alpha subunit. In Streptomyces coelicolor (strain ATCC BAA-471 / A3(2) / M145), this protein is Succinate--CoA ligase [ADP-forming] subunit beta 1.